Consider the following 104-residue polypeptide: Conantokin-P (104 aa).

The first 26 residues, 1-26 (MQLYTYLYLLVPLVTFHLILSTGTLA), serve as a signal peptide directing secretion. Positions 27–80 (HGGTLTERRSTDTTALKPEPVLLQKSDARSTDDNDKDRLTQMKRILKKRGNKAR) are excised as a propeptide. Positions 29–87 (GTLTERRSTDTTALKPEPVLLQKSDARSTDDNDKDRLTQMKRILKKRGNKARGEEEHSK) are disordered. Over residues 52–66 (SDARSTDDNDKDRLT) the composition is skewed to basic and acidic residues. Residues glutamate 83, glutamate 84, glutamate 90, glutamate 94, and glutamate 103 each carry the 4-carboxyglutamate modification. A divalent metal cation contacts are provided by glutamate 90 and glutamate 94. An intrachain disulfide couples cysteine 91 to cysteine 104.

Belongs to the conotoxin B superfamily. As to expression, expressed by the venom duct.

The protein resides in the secreted. In terms of biological role, conantokins inhibit N-methyl-D-aspartate (NMDA) receptors. This toxin has the highest potency for the NR2B/GRIN2B subunit, followed by NR2A/GRIN2A, NR2C/GRIN2C, and NR2D/GRIN2D subunits. The chain is Conantokin-P from Conus purpurascens (Purple cone).